A 207-amino-acid chain; its full sequence is LexA repressor (207 aa).

The H-T-H motif DNA-binding region spans 28 to 48 (VREIGEAVGLASSFTVHGHLS). Residues serine 130 and lysine 168 each act as for autocatalytic cleavage activity in the active site.

Belongs to the peptidase S24 family. In terms of assembly, homodimer.

The enzyme catalyses Hydrolysis of Ala-|-Gly bond in repressor LexA.. In terms of biological role, represses a number of genes involved in the response to DNA damage (SOS response), including recA and lexA. In the presence of single-stranded DNA, RecA interacts with LexA causing an autocatalytic cleavage which disrupts the DNA-binding part of LexA, leading to derepression of the SOS regulon and eventually DNA repair. In Staphylococcus aureus (strain Newman), this protein is LexA repressor.